The sequence spans 686 residues: Pollen receptor-like kinase 5 (686 aa).

Residues 1 to 39 form the signal peptide; that stretch reads MRNWEDPFTLACNTALKKNLPSCIFIIIFISVLCPVAMS. The Extracellular segment spans residues 40-283; the sequence is QVVVPDSDAD…GKKAGSFYTL (244 aa). N-linked (GlcNAc...) asparagine glycosylation is present at Asn60. 5 LRR repeats span residues 112 to 135, 136 to 159, 161 to 184, 185 to 208, and 210 to 230; these read MKNLRTISFMNNNFNGPMPQVKRF, TSLKSLYLSNNRFSGEIPADAFLG, PLLKKILLANNAFRGTIPSSLASL, PMLLELRLNGNQFQGQIPSFQQKD, and KLASFENNDLDGPIPESLRNM. Residues 284 to 304 traverse the membrane as a helical segment; the sequence is AIILIVIGIILVIIALVFCFV. The Cytoplasmic segment spans residues 305–686; that stretch reads QSRRRNFLSA…DDDFGFSMNR (382 aa). The span at 328-339 shows a compositional bias: polar residues; the sequence is NYHQSTNKNNKP. Positions 328 to 355 are disordered; sequence NYHQSTNKNNKPAESVNHTRRGSMPDPG. The region spanning 375–648 is the Protein kinase domain; that stretch reads RASAEVLGSG…REVVEMVEML (274 aa). Ser377 bears the Phosphoserine mark. ATP-binding positions include 381 to 389 and Lys403; that span reads LGSGTFGAS. A phosphoserine mark is found at Ser455 and Ser458. Thr472 bears the Phosphothreonine mark. Tyr542 carries the phosphotyrosine modification. The residue at position 545 (Ser545) is a Phosphoserine.

It belongs to the protein kinase superfamily. Ser/Thr protein kinase family. As to quaternary structure, interacts with the GRI peptide. Expressed in pollen and/or in flowers. Detected at low levels in leaves.

Its subcellular location is the cell membrane. It carries out the reaction L-seryl-[protein] + ATP = O-phospho-L-seryl-[protein] + ADP + H(+). The catalysed reaction is L-threonyl-[protein] + ATP = O-phospho-L-threonyl-[protein] + ADP + H(+). Its function is as follows. Receptor-like kinase involved in the control of pollen germination and pollen tube polar growth. The extracellular domain serves as a sensor for peptides derived from GRI. May act as a downstream element for ROS-dependent cell death induced by GRI. In Arabidopsis thaliana (Mouse-ear cress), this protein is Pollen receptor-like kinase 5.